Reading from the N-terminus, the 125-residue chain is Ribonuclease P protein component (125 aa).

The protein belongs to the RnpA family. As to quaternary structure, consists of a catalytic RNA component (M1 or rnpB) and a protein subunit.

The enzyme catalyses Endonucleolytic cleavage of RNA, removing 5'-extranucleotides from tRNA precursor.. In terms of biological role, RNaseP catalyzes the removal of the 5'-leader sequence from pre-tRNA to produce the mature 5'-terminus. It can also cleave other RNA substrates such as 4.5S RNA. The protein component plays an auxiliary but essential role in vivo by binding to the 5'-leader sequence and broadening the substrate specificity of the ribozyme. The chain is Ribonuclease P protein component from Rhodococcus opacus (strain B4).